A 311-amino-acid polypeptide reads, in one-letter code: DNA replication terminus site-binding protein (311 aa).

This sequence belongs to the Tus family.

It is found in the cytoplasm. Its function is as follows. Trans-acting protein required for termination of DNA replication. Binds to DNA replication terminator sequences (terA to terF) to prevent the passage of replication forks. The termination efficiency will be affected by the affinity of this protein for the terminator sequence. This is DNA replication terminus site-binding protein from Yersinia pseudotuberculosis serotype I (strain IP32953).